The sequence spans 122 residues: Large ribosomal subunit protein uL14c (122 aa).

This sequence belongs to the universal ribosomal protein uL14 family. In terms of assembly, part of the 50S ribosomal subunit.

The protein localises to the plastid. It localises to the chloroplast. In terms of biological role, binds to 23S rRNA. This Arabis hirsuta (Hairy rock-cress) protein is Large ribosomal subunit protein uL14c.